Reading from the N-terminus, the 229-residue chain is Uracil-DNA glycosylase (229 aa).

Asp-72 (proton acceptor) is an active-site residue.

Belongs to the uracil-DNA glycosylase (UDG) superfamily. UNG family.

The protein localises to the cytoplasm. It catalyses the reaction Hydrolyzes single-stranded DNA or mismatched double-stranded DNA and polynucleotides, releasing free uracil.. Functionally, excises uracil residues from the DNA which can arise as a result of misincorporation of dUMP residues by DNA polymerase or due to deamination of cytosine. This chain is Uracil-DNA glycosylase, found in Dichelobacter nodosus (strain VCS1703A).